We begin with the raw amino-acid sequence, 150 residues long: Detocs response regulatory protein DtcB (150 aa).

Residues Lys-2 to Leu-150 enclose the Response regulatory domain. Asp-54 carries the post-translational modification 4-aspartylphosphate.

Probably phosphorylated by DtcA.

Possible phosphate scavenger member of the two-component regulatory system Detocs that confers resistance to bacteriophage. When the system (DtcA-DtcB-DtcC) is expressed in a susceptible E.coli (strain MG1655) it confers resistance to bacteriophages T2, T4, T5, T7, SECphi4, SECphi6 and SECphi27; the level of resistance varies, resistance to T2, T7 and SECphi4 is not very high. DtcA probably autophosphorylates upon sensing viral infection, and subsequently transfers the phosphate signal to DtcC which activates it, leading to an antiviral defense; DtcB (this subunit) may scavenge phosphorylation signals from accidental activation of DtcA. This chain is Detocs response regulatory protein DtcB, found in Enterobacter cloacae (strain JD6301).